The primary structure comprises 262 residues: Cutinase 1 (262 aa).

Tyr-61 is a binding site for poly(ethylene terephthalate). Residue Ser-131 is the Nucleophile of the active site. Poly(ethylene terephthalate) is bound by residues Met-132 and Trp-156. Active-site charge relay system residues include Asp-177 and His-209. Cys-242 and Cys-260 are disulfide-bonded.

It belongs to the AB hydrolase superfamily.

The protein localises to the secreted. It localises to the periplasm. It catalyses the reaction (ethylene terephthalate)(n) + H2O = (ethylene terephthalate)(n-1) + 4-[(2-hydroxyethoxy)carbonyl]benzoate + H(+). It carries out the reaction a butanoate ester + H2O = an aliphatic alcohol + butanoate + H(+). The catalysed reaction is an acetyl ester + H2O = an aliphatic alcohol + acetate + H(+). The enzyme catalyses cutin + H2O = cutin monomers.. Its function is as follows. Catalyzes the hydrolysis of cutin, a polyester that forms the structure of plant cuticle. Shows esterase activity towards p-nitrophenol-linked aliphatic esters (pNP-aliphatic esters). Capable of degrading the plastic poly(ethylene terephthalate) (PET), the most abundant polyester plastic in the world. Capable of degrading the bioplastic poly(lactic acid) (PLLA). The sequence is that of Cutinase 1 from Thermobifida cellulosilytica.